The following is a 485-amino-acid chain: Adenosylhomocysteinase (485 aa).

Residues Thr64, Asp139, and Glu205 each contribute to the substrate site. NAD(+) is bound at residue 206–208; sequence TTT. The substrate site is built by Lys235 and Asp239. NAD(+) is bound by residues Asn240, 269 to 274, Glu292, Asn327, 348 to 350, and Asn397; these read GYGDVG and IGH.

The protein belongs to the adenosylhomocysteinase family. NAD(+) is required as a cofactor.

It catalyses the reaction S-adenosyl-L-homocysteine + H2O = L-homocysteine + adenosine. The protein operates within amino-acid biosynthesis; L-homocysteine biosynthesis; L-homocysteine from S-adenosyl-L-homocysteine: step 1/1. Functionally, adenosylhomocysteine is a competitive inhibitor of S-adenosyl-L-methionine-dependent methyl transferase reactions; therefore adenosylhomocysteinase may play a key role in the control of methylations via regulation of the intracellular concentration of adenosylhomocysteine. The protein is Adenosylhomocysteinase (SAHH) of Nicotiana sylvestris (Wood tobacco).